The chain runs to 354 residues: Lysophosphatidic acid receptor 3 (354 aa).

The Extracellular portion of the chain corresponds to 1-31; sequence MNECHYDKRMDFFYNRSNTDTADEWTGTKLV. Residue Asn-15 is glycosylated (N-linked (GlcNAc...) asparagine). Residues 32 to 52 form a helical membrane-spanning segment; that stretch reads IVLCVGTFFCLFIFFSNSLVI. Residues 53-67 lie on the Cytoplasmic side of the membrane; the sequence is AAVITNRKFHFPFYY. Residues 68-88 traverse the membrane as a helical segment; it reads LLANLAAADFFAGIAYVFLMF. The Extracellular segment spans residues 89–101; that stretch reads NTGPVSKTLTVNR. The chain crosses the membrane as a helical span at residues 102 to 124; it reads WLLRQGLLDTSLTASLANLLVIA. The Cytoplasmic portion of the chain corresponds to 125–146; the sequence is VERHMSIMRMRIHSNLTKKRVT. Residues 147–167 form a helical membrane-spanning segment; the sequence is LLILLVWAIAIFMGAVPTLGW. Residues 168 to 186 are Extracellular-facing; it reads NCLCNISACSSLAPIYSRS. The N-linked (GlcNAc...) asparagine glycan is linked to Asn-172. A helical membrane pass occupies residues 187–207; the sequence is YLIFWTVSNLLAFFIMVVVYV. Over 208-240 the chain is Cytoplasmic; that stretch reads RIYMYVKRKTNVLSPHTSGSISRRRAPMKLMKT. Residues 241 to 261 form a helical membrane-spanning segment; sequence VMTVLGAFVVCWTPGLVVLLL. Residues 262–276 are Extracellular-facing; the sequence is DGLNCKQCNVQHVKR. The helical transmembrane segment at 277-295 threads the bilayer; that stretch reads WFLLLALLNSVMNPIIYSY. Topologically, residues 296-354 are cytoplasmic; that stretch reads KDEDMYNTMRKMICCAPHDSNAERHPSRIPSTIHSRSDTGSQYLEDSISQGQVCNKSSS. A lipid anchor (S-palmitoyl cysteine) is attached at Cys-309.

Belongs to the G-protein coupled receptor 1 family.

Its subcellular location is the cell membrane. Functionally, receptor for lysophosphatidic acid (LPA), a mediator of diverse cellular activities. Seems to be coupled to the G(i)/G(o) and G(q) families of heteromeric G proteins. This Rattus norvegicus (Rat) protein is Lysophosphatidic acid receptor 3 (Lpar3).